A 488-amino-acid polypeptide reads, in one-letter code: V-type proton ATPase subunit B 1 (488 aa).

The protein belongs to the ATPase alpha/beta chains family. As to quaternary structure, V-ATPase is a heteromultimeric enzyme composed of a peripheral catalytic V1 complex (main components: subunits A, B, C, D, E, and F) attached to an integral membrane V0 proton pore complex (main component: the proteolipid protein).

Non-catalytic subunit of the peripheral V1 complex of vacuolar ATPase. V-ATPase is responsible for acidifying a variety of intracellular compartments in eukaryotic cells. In Hordeum vulgare (Barley), this protein is V-type proton ATPase subunit B 1.